A 724-amino-acid chain; its full sequence is Protein BCH1 (724 aa).

Residues 51-65 are compositionally biased toward low complexity; that stretch reads TTATASANDNGATSN. The disordered stretch occupies residues 51-71; it reads TTATASANDNGATSNINGQDP. The CHS5-binding stretch occupies residues 711–724; it reads LNFLKNFTNDTFDN.

It belongs to the CHAPS family. As to quaternary structure, component of the CHS5/6 complex composed of the 4 CHAPS proteins BCH1, BCH2, BUD7, and CHS6 as well as at least CHS5 and GTP-bound ARF1. The complex interacts with the cargo protein CHS3.

The protein resides in the golgi apparatus. Its subcellular location is the trans-Golgi network membrane. Member of the CHS5-ARF1P-binding proteins (CHAPS) which mediates export of specific cargo proteins, including chitin synthase CHS3. The polypeptide is Protein BCH1 (BCH1) (Saccharomyces cerevisiae (strain ATCC 204508 / S288c) (Baker's yeast)).